A 594-amino-acid polypeptide reads, in one-letter code: Adenine deaminase 1 (594 aa).

It belongs to the metallo-dependent hydrolases superfamily. Adenine deaminase family. The cofactor is Mn(2+).

The catalysed reaction is adenine + H2O + H(+) = hypoxanthine + NH4(+). The protein is Adenine deaminase 1 of Latilactobacillus sakei subsp. sakei (strain 23K) (Lactobacillus sakei subsp. sakei).